The chain runs to 381 residues: RxLR effector protein 54 (381 aa).

The first 19 residues, 1–19, serve as a signal peptide directing secretion; the sequence is MRFQSIMMLTITCAGTCLA. A RxLR-dEER motif is present at residues 57–75; sequence RFLRFDTVARDTAGNDEER. 5 WY-domain regions span residues 97–150, 151–198, 199–247, 251–299, and 302–354; these read SAEE…ANNG, NQAF…SLSG, NWIR…WNKN, FFGD…LLTS, and SHKT…RDKI. The ATG8 interacting motif signature appears at 372–381; it reads KPLDFDWEIV.

This sequence belongs to the RxLR effector family. Interacts via its C-terminal AIM with host ATG8CL.

It is found in the secreted. The protein resides in the host nucleus. It localises to the host cytoplasm. Effector that specifically binds host autophagy protein ATG8CL of the ATG8 family to stimulate autophagosome formation and subsequent autophagy rather than blocking autophagic flux. The pathogen remodels host-microbe interface by co-opting the host autophagy machinery which plays a key role in plant immunity. PexRD54 competes with the autophagy cargo receptor Joka2 to deplete it out of ATG8CL complexes and interferes with Joka2's positive effect on pathogen defense. This Phytophthora infestans (strain T30-4) (Potato late blight agent) protein is RxLR effector protein 54.